A 545-amino-acid polypeptide reads, in one-letter code: Glucose-6-phosphate isomerase (545 aa).

E351 (proton donor) is an active-site residue. Residues H382 and K510 contribute to the active site.

Belongs to the GPI family.

The protein resides in the cytoplasm. The catalysed reaction is alpha-D-glucose 6-phosphate = beta-D-fructose 6-phosphate. It functions in the pathway carbohydrate biosynthesis; gluconeogenesis. The protein operates within carbohydrate degradation; glycolysis; D-glyceraldehyde 3-phosphate and glycerone phosphate from D-glucose: step 2/4. Functionally, catalyzes the reversible isomerization of glucose-6-phosphate to fructose-6-phosphate. The sequence is that of Glucose-6-phosphate isomerase from Shewanella sp. (strain ANA-3).